The sequence spans 437 residues: Enolase (437 aa).

(2R)-2-phosphoglycerate is bound at residue Gln-162. The active-site Proton donor is the Glu-204. Residues Asp-251, Glu-297, and Asp-324 each coordinate Mg(2+). (2R)-2-phosphoglycerate-binding residues include Lys-349, Arg-378, Ser-379, and Lys-400. The active-site Proton acceptor is Lys-349.

It belongs to the enolase family. Requires Mg(2+) as cofactor.

The protein localises to the cytoplasm. It is found in the secreted. Its subcellular location is the cell surface. The catalysed reaction is (2R)-2-phosphoglycerate = phosphoenolpyruvate + H2O. Its pathway is carbohydrate degradation; glycolysis; pyruvate from D-glyceraldehyde 3-phosphate: step 4/5. Functionally, catalyzes the reversible conversion of 2-phosphoglycerate (2-PG) into phosphoenolpyruvate (PEP). It is essential for the degradation of carbohydrates via glycolysis. This chain is Enolase, found in Prosthecochloris aestuarii (strain DSM 271 / SK 413).